The chain runs to 372 residues: tRNA-specific 2-thiouridylase MnmA (372 aa).

Residues 16–23 (GMSGGVDS) and Met42 each bind ATP. The interval 102 to 104 (NPD) is interaction with target base in tRNA. Cys107 (nucleophile) is an active-site residue. The cysteines at positions 107 and 205 are disulfide-linked. Gly132 serves as a coordination point for ATP. Residues 155–157 (KDQ) are interaction with tRNA. Cys205 serves as the catalytic Cysteine persulfide intermediate. The tract at residues 317–318 (RY) is interaction with tRNA.

It belongs to the MnmA/TRMU family.

The protein localises to the cytoplasm. The catalysed reaction is S-sulfanyl-L-cysteinyl-[protein] + uridine(34) in tRNA + AH2 + ATP = 2-thiouridine(34) in tRNA + L-cysteinyl-[protein] + A + AMP + diphosphate + H(+). Catalyzes the 2-thiolation of uridine at the wobble position (U34) of tRNA, leading to the formation of s(2)U34. This chain is tRNA-specific 2-thiouridylase MnmA, found in Shewanella denitrificans (strain OS217 / ATCC BAA-1090 / DSM 15013).